Reading from the N-terminus, the 279-residue chain is 3-methyl-2-oxobutanoate hydroxymethyltransferase (279 aa).

Mg(2+) is bound by residues Asp43 and Asp82. Residues 43-44, Asp82, and Lys112 contribute to the 3-methyl-2-oxobutanoate site; that span reads DS. Glu114 is a Mg(2+) binding site. Glu181 acts as the Proton acceptor in catalysis.

Belongs to the PanB family. In terms of assembly, homodecamer; pentamer of dimers. Mg(2+) serves as cofactor.

It is found in the cytoplasm. It carries out the reaction 3-methyl-2-oxobutanoate + (6R)-5,10-methylene-5,6,7,8-tetrahydrofolate + H2O = 2-dehydropantoate + (6S)-5,6,7,8-tetrahydrofolate. The protein operates within cofactor biosynthesis; (R)-pantothenate biosynthesis; (R)-pantoate from 3-methyl-2-oxobutanoate: step 1/2. Functionally, catalyzes the reversible reaction in which hydroxymethyl group from 5,10-methylenetetrahydrofolate is transferred onto alpha-ketoisovalerate to form ketopantoate. In Bacillus pumilus (strain SAFR-032), this protein is 3-methyl-2-oxobutanoate hydroxymethyltransferase.